The primary structure comprises 116 residues: Promotilin (116 aa).

Positions 1–25 are cleaved as a signal peptide; sequence MVSRKAVAVLLMVHVAVMLASQTEA. The segment at 39–74 is disordered; the sequence is REKERNKGQKKSLIVQQRSEEVGPLDPVEPPEEEEN.

This sequence belongs to the motilin family.

The protein localises to the secreted. Functionally, plays an important role in the regulation of interdigestive gastrointestinal motility and indirectly causes rhythmic contraction of duodenal and colonic smooth muscle. The polypeptide is Promotilin (MLN) (Felis catus (Cat)).